The following is a 227-amino-acid chain: ATP phosphoribosyltransferase (227 aa).

It belongs to the ATP phosphoribosyltransferase family. Short subfamily. In terms of assembly, heteromultimer composed of HisG and HisZ subunits.

It is found in the cytoplasm. The enzyme catalyses 1-(5-phospho-beta-D-ribosyl)-ATP + diphosphate = 5-phospho-alpha-D-ribose 1-diphosphate + ATP. It participates in amino-acid biosynthesis; L-histidine biosynthesis; L-histidine from 5-phospho-alpha-D-ribose 1-diphosphate: step 1/9. Functionally, catalyzes the condensation of ATP and 5-phosphoribose 1-diphosphate to form N'-(5'-phosphoribosyl)-ATP (PR-ATP). Has a crucial role in the pathway because the rate of histidine biosynthesis seems to be controlled primarily by regulation of HisG enzymatic activity. In Bordetella avium (strain 197N), this protein is ATP phosphoribosyltransferase.